Here is a 503-residue protein sequence, read N- to C-terminus: Probable cytosol aminopeptidase (503 aa).

Mn(2+)-binding residues include lysine 270 and aspartate 275. The active site involves lysine 282. Residues aspartate 293, aspartate 352, and glutamate 354 each contribute to the Mn(2+) site. Arginine 356 is a catalytic residue.

It belongs to the peptidase M17 family. The cofactor is Mn(2+).

Its subcellular location is the cytoplasm. The enzyme catalyses Release of an N-terminal amino acid, Xaa-|-Yaa-, in which Xaa is preferably Leu, but may be other amino acids including Pro although not Arg or Lys, and Yaa may be Pro. Amino acid amides and methyl esters are also readily hydrolyzed, but rates on arylamides are exceedingly low.. It catalyses the reaction Release of an N-terminal amino acid, preferentially leucine, but not glutamic or aspartic acids.. Presumably involved in the processing and regular turnover of intracellular proteins. Catalyzes the removal of unsubstituted N-terminal amino acids from various peptides. This chain is Probable cytosol aminopeptidase, found in Shigella boydii serotype 18 (strain CDC 3083-94 / BS512).